We begin with the raw amino-acid sequence, 241 residues long: Biosynthetic peptidoglycan transglycosylase (241 aa).

The helical transmembrane segment at 19–39 threads the bilayer; that stretch reads AILAVLGVWIAGILLFSVMPV.

It belongs to the glycosyltransferase 51 family.

The protein resides in the cell inner membrane. The enzyme catalyses [GlcNAc-(1-&gt;4)-Mur2Ac(oyl-L-Ala-gamma-D-Glu-L-Lys-D-Ala-D-Ala)](n)-di-trans,octa-cis-undecaprenyl diphosphate + beta-D-GlcNAc-(1-&gt;4)-Mur2Ac(oyl-L-Ala-gamma-D-Glu-L-Lys-D-Ala-D-Ala)-di-trans,octa-cis-undecaprenyl diphosphate = [GlcNAc-(1-&gt;4)-Mur2Ac(oyl-L-Ala-gamma-D-Glu-L-Lys-D-Ala-D-Ala)](n+1)-di-trans,octa-cis-undecaprenyl diphosphate + di-trans,octa-cis-undecaprenyl diphosphate + H(+). It functions in the pathway cell wall biogenesis; peptidoglycan biosynthesis. Peptidoglycan polymerase that catalyzes glycan chain elongation from lipid-linked precursors. The chain is Biosynthetic peptidoglycan transglycosylase from Cronobacter sakazakii (strain ATCC BAA-894) (Enterobacter sakazakii).